Here is an 867-residue protein sequence, read N- to C-terminus: Dynamin-1 (867 aa).

In terms of domain architecture, Dynamin-type G spans 28-294; sequence DLDLPQIAVV…LTNHIRDTLP (267 aa). The G1 motif stretch occupies residues 38–45; that stretch reads GGQSAGKS. GDP contacts are provided by serine 41, glycine 43, lysine 44, serine 45, serine 46, arginine 59, and glycine 60. The segment at 64-66 is G2 motif; it reads VTR. Tyrosine 80 is subject to Phosphotyrosine. Tyrosine 125 is modified (3'-nitrotyrosine; alternate). Phosphotyrosine; alternate is present on tyrosine 125. A G3 motif region spans residues 136–139; that stretch reads DLPG. Positions 205–208 are G4 motif; sequence TKLD. Residues lysine 206, aspartate 208, aspartate 211, asparagine 236, arginine 237, and glutamine 239 each coordinate GDP. Residues 235–238 are G5 motif; sequence VNRS. 2 positions are modified to phosphoserine: serine 306 and serine 347. Tyrosine 354 is subject to Phosphotyrosine. At serine 512 the chain carries Phosphoserine. A PH domain is found at 515–625; that stretch reads QDEILVIRKG…WKASFLRAGV (111 aa). Residues 659–750 enclose the GED domain; that stretch reads VETIRNLVDS…IIGDINTTTV (92 aa). Positions 767–867 are disordered; that stretch reads SVPAGRRSPT…HENRAGKARL (101 aa). 2 positions are modified to phosphoserine: serine 774 and serine 778. Arginine 796 carries the post-translational modification Omega-N-methylarginine. Position 822 is a phosphoserine (serine 822). The span at 825-843 shows a compositional bias: pro residues; sequence PFGPPPQVPSRPNRAPPGV. 3 positions are modified to phosphoserine: glycine 847, leucine 851, and lysine 857. Over residues 856 to 867 the composition is skewed to basic and acidic residues; that stretch reads GKHENRAGKARL.

Belongs to the TRAFAC class dynamin-like GTPase superfamily. Dynamin/Fzo/YdjA family. In terms of assembly, homodimer; homodimerization is mediated by the dynamin-type G domain which promotes assembly-stimulated GTPase activity. Homo-tetramer formed from two dimers in the absence of lipid. Oligomerizes into a helical polymer that self-assembles around the vesicle membrane, when associated to the menbrane through lipid binding. Interacts (via C-terminal proline-rich domain (PRD)) with SNX9 (via SH3 domain); this interaction allows regulation of DNM1 self-assembly during late stages of endocytic vesicle formation and supports DNM1's early functions in accelerating clathrin-coated pits (CCPs) maturation in non neuronals cell. Interacts (via C-terminal proline-rich domain (PRD)) with MYO1E (via SH3 domain); this interaction regulates receptor-mediated endocytosis. Interacts with SNX33 (via SH3 domain); this interaction decreases DNM1-dependent endocytosis. Interacts with DIAPH1. Interacts with GRB2 (via SH3 domain); this interaction mediates disassembly of DNM1 polymers, therefore modulates self-assembly. Forms a complex with BIN1 (via SH3 domain) and SH3GL2 (via SH3 domain). Forms a complex with SH3GL2 (via SH3 domain) and AMPH (via SH3 domain). Forms a complex with SH3GL2 (via SH3 domain) and SYNJ1. Interacts (via C-terminal proline-rich domain (PRD)) with SYT1; this interaction facilitates vesicle fission during clathrin-mediated endocytosis (CME). Interacts (via C-terminal proline-rich domain (PRD)) with PLCG1 (via SH3 domain); this interaction stimulates the release of GDP from DNM1 and enhances DNM1-dependent endocytosis. Interacts with SNPH; this interaction inhibits the binding of DNM1 to AMPH and DNM1-receptor-mediated endocytosis. Interacts with CAV1. Interacts with SH3GLB1 (via SH3 domain). Interacts with PACSIN1 (via SH3 domain), PACSIN2 (via SH3 domain) and PACSIN3 (via SH3 domain). Interacts with UNC119; this interaction decreases DNM1's GTPase activity and affects DNM1's interaction with AMPH. Interacts with AMPH. Interacts (GTP-bound form) with DNAJC6; this interaction allows clathrin-coated vesicle (CCV) formation at the plasma membrane. Post-translationally, phosphorylation at Ser-774 by GSK3B/GSK3-beta leads to inactivation of receptor-mediated endocytosis in non-neuronal cells. Dephosphorylation at Ser-774, through the EGFR downstream signaling, leads to activation and regulates early stages of clathrin-mediated endocytosis (CME). Phosphorylated on Tyr in response to EGF stimulation in cells expressing truncated EGFR. Phosphorylated by CDK5 leading to synaptic vesicle endocytosis (SVE) activation. In terms of tissue distribution, expressed exclusively in the brain.

The protein localises to the cell membrane. It localises to the membrane. Its subcellular location is the clathrin-coated pit. It is found in the cytoplasmic vesicle. The protein resides in the presynapse. The protein localises to the secretory vesicle. It localises to the chromaffin granule. It carries out the reaction GTP + H2O = GDP + phosphate + H(+). Its function is as follows. Catalyzes the hydrolysis of GTP and utilizes this energy to mediate vesicle scission and participates in many forms of endocytosis, such as clathrin-mediated endocytosis or synaptic vesicle endocytosis as well as rapid endocytosis (RE). Associates to the membrane, through lipid binding, and self-assembles into rings and stacks of interconnected rings through oligomerization to form a helical polymer around the vesicle membrane leading to constriction of invaginated coated pits around their necks. Self-assembly of the helical polymer induces membrane tubules narrowing until the polymer reaches a length sufficient to trigger GTP hydrolysis. Depending on the curvature imposed on the tubules, membrane detachment from the helical polymer upon GTP hydrolysis can cause spontaneous hemifission followed by complete fission. May play a role in regulating early stages of clathrin-mediated endocytosis in non-neuronal cells through its activation by dephosphorylation via the signaling downstream of EGFR. Controls vesicle size at a step before fission, during formation of membrane pits, at hippocampal synapses. Controls plastic adaptation of the synaptic vesicle recycling machinery to high levels of activity. Mediates rapid endocytosis (RE), a Ca(2+)-dependent and clathrin- and K(+)-independent process in chromaffin cells. Microtubule-associated force-producing protein involved in producing microtubule bundles and able to bind and hydrolyze GTP. Through its interaction with DNAJC6, acts during the early steps of clathrin-coated vesicle (CCV) formation. This is Dynamin-1 from Mus musculus (Mouse).